The primary structure comprises 257 residues: NH(3)-dependent NAD(+) synthetase (257 aa).

Position 32-39 (32-39 (GLSGGVDS)) interacts with ATP. Asp38 is a Mg(2+) binding site. Arg113 is a binding site for deamido-NAD(+). Thr133 contacts ATP. Glu138 contributes to the Mg(2+) binding site. Positions 162 and 184 each coordinate ATP.

It belongs to the NAD synthetase family. As to quaternary structure, homodimer.

It carries out the reaction deamido-NAD(+) + NH4(+) + ATP = AMP + diphosphate + NAD(+) + H(+). The protein operates within cofactor biosynthesis; NAD(+) biosynthesis; NAD(+) from deamido-NAD(+) (ammonia route): step 1/1. Its function is as follows. Catalyzes the ATP-dependent amidation of deamido-NAD to form NAD. Uses ammonia as a nitrogen source. The polypeptide is NH(3)-dependent NAD(+) synthetase (Wolinella succinogenes (strain ATCC 29543 / DSM 1740 / CCUG 13145 / JCM 31913 / LMG 7466 / NCTC 11488 / FDC 602W) (Vibrio succinogenes)).